The chain runs to 391 residues: Nucleosome assembly protein 1-like 1 (391 aa).

Residues 1-10 are compositionally biased toward basic and acidic residues; it reads MADIDNKEQS. A disordered region spans residues 1-32; it reads MADIDNKEQSELDQDLEDVEEVEEEETGEETK. A2 bears the N-acetylalanine mark. S10 carries the post-translational modification Phosphoserine. The segment covering 11 to 28 has biased composition (acidic residues); the sequence is ELDQDLEDVEEVEEEETG. T62 and T64 each carry phosphothreonine. S69 carries the post-translational modification Phosphoserine. The residue at position 116 (K116) is an N6-acetyllysine. The short motif at 125-150 is the NAP1L motif element; the sequence is YEPTEEECEWKPDEEDEVSEELKEKA. Residues 131 to 143 show a composition bias toward acidic residues; the sequence is ECEWKPDEEDEVS. A disordered region spans residues 131–163; the sequence is ECEWKPDEEDEVSEELKEKAKIEDEKKDEEKED. S143 bears the Phosphoserine mark. A compositionally biased stretch (basic and acidic residues) spans 144–163; the sequence is EELKEKAKIEDEKKDEEKED. The short motif at 273 to 279 is the Nuclear localization signal element; sequence IKKKQKH. Over residues 346-376 the composition is skewed to acidic residues; the sequence is AIEDDDDDYDEEGEEADEEGEEEGDEENDPD. A disordered region spans residues 346–391; it reads AIEDDDDDYDEEGEEADEEGEEEGDEENDPDYDPKKDQNPAECKQQ. A 5-glutamyl polyglycine mark is found at E359 and E360. The segment covering 377-391 has biased composition (basic and acidic residues); sequence YDPKKDQNPAECKQQ. The residue at position 388 (C388) is a Cysteine methyl ester. The S-farnesyl cysteine moiety is linked to residue C388. A propeptide spans 389–391 (removed in mature form); sequence KQQ.

The protein belongs to the nucleosome assembly protein (NAP) family. As to quaternary structure, homodimer. The dimer binds strongly and sequentially to single and double H2A-H2B heterodimers. Interacts with ERCC6; this interaction increases ERCC6 processivity. Interacts with RAD54. Interacts with SETD1A. Polyglycylated by TTLL10 on glutamate residues, resulting in polyglycine chains on the gamma-carboxyl group. Both polyglutamylation and polyglycylation modifications can coexist on the same protein on adjacent residues, and lowering polyglycylation levels increases polyglutamylation, and reciprocally. Post-translationally, polyglutamylated by TTLL4 on glutamate residues, resulting in polyglutamate chains on the gamma-carboxyl group. Both polyglutamylation and polyglycylation modifications can coexist on the same protein on adjacent residues, and lowering polyglycylation levels increases polyglutamylation, and reciprocally. Highly expressed in the brain (at protein level). High expression in cerebral cortex, not in cerebellar cortex.

It localises to the nucleus. The protein localises to the cytoplasm. It is found in the melanosome. In terms of biological role, histone chaperone that plays a role in the nuclear import of H2A-H2B and nucleosome assembly. Also participates in several important DNA repair mechanisms: greatly enhances ERCC6-mediated chromatin remodeling which is essential for transcription-coupled nucleotide excision DNA repair. Also stimulates homologous recombination (HR) by RAD51 and RAD54 which is essential in mitotic DNA double strand break (DSB) repair. Plays a key role in the regulation of embryonic neurogenesis. Promotes the proliferation of neural progenitors and inhibits neuronal differentiation during cortical development. Regulates neurogenesis via the modulation of RASSF10; regulates RASSF10 expression by promoting SETD1A-mediated H3K4 methylation at the RASSF10 promoter. This Mus musculus (Mouse) protein is Nucleosome assembly protein 1-like 1 (Nap1l1).